Here is a 381-residue protein sequence, read N- to C-terminus: Chorismate synthase (381 aa).

NADP(+) is bound by residues Arg-39 and Arg-45. Residues 127–129 (RAS), 248–249 (QS), Gly-293, 308–312 (KPIPT), and Arg-334 contribute to the FMN site.

Belongs to the chorismate synthase family. Homotetramer. FMNH2 serves as cofactor.

It carries out the reaction 5-O-(1-carboxyvinyl)-3-phosphoshikimate = chorismate + phosphate. The protein operates within metabolic intermediate biosynthesis; chorismate biosynthesis; chorismate from D-erythrose 4-phosphate and phosphoenolpyruvate: step 7/7. In terms of biological role, catalyzes the anti-1,4-elimination of the C-3 phosphate and the C-6 proR hydrogen from 5-enolpyruvylshikimate-3-phosphate (EPSP) to yield chorismate, which is the branch point compound that serves as the starting substrate for the three terminal pathways of aromatic amino acid biosynthesis. This reaction introduces a second double bond into the aromatic ring system. This is Chorismate synthase from Caldicellulosiruptor saccharolyticus (strain ATCC 43494 / DSM 8903 / Tp8T 6331).